A 214-amino-acid polypeptide reads, in one-letter code: 3-isopropylmalate dehydratase small subunit (214 aa).

Belongs to the LeuD family. LeuD type 1 subfamily. In terms of assembly, heterodimer of LeuC and LeuD.

The catalysed reaction is (2R,3S)-3-isopropylmalate = (2S)-2-isopropylmalate. Its pathway is amino-acid biosynthesis; L-leucine biosynthesis; L-leucine from 3-methyl-2-oxobutanoate: step 2/4. Functionally, catalyzes the isomerization between 2-isopropylmalate and 3-isopropylmalate, via the formation of 2-isopropylmaleate. The chain is 3-isopropylmalate dehydratase small subunit from Pseudomonas putida (strain ATCC 47054 / DSM 6125 / CFBP 8728 / NCIMB 11950 / KT2440).